We begin with the raw amino-acid sequence, 157 residues long: MRIGHGYDVHRFGEGDFITLGGVRIPHKHGLVAHSDGDVLLHALSDALLGAAALGDIGKHFPDTDPRFKGADSRALLRHVVAIVAEKGWKVGNVDATIVAQAPKMAPHIETMRGSIAEDLGVAVDQVNVKATTTERLGFTGREEGIAVHAVALLMAR.

Residues Asp8 and His10 each coordinate a divalent metal cation. Residues 8-10 and 34-35 each bind 4-CDP-2-C-methyl-D-erythritol 2-phosphate; these read DVH and HS. His42 provides a ligand contact to a divalent metal cation. 4-CDP-2-C-methyl-D-erythritol 2-phosphate is bound by residues 56–58, 61–65, 100–106, 132–135, Phe139, and Arg142; these read DIG, FPDTD, AQAPKMA, and TTTE.

The protein belongs to the IspF family. Homotrimer. It depends on a divalent metal cation as a cofactor.

It carries out the reaction 4-CDP-2-C-methyl-D-erythritol 2-phosphate = 2-C-methyl-D-erythritol 2,4-cyclic diphosphate + CMP. It participates in isoprenoid biosynthesis; isopentenyl diphosphate biosynthesis via DXP pathway; isopentenyl diphosphate from 1-deoxy-D-xylulose 5-phosphate: step 4/6. Its function is as follows. Involved in the biosynthesis of isopentenyl diphosphate (IPP) and dimethylallyl diphosphate (DMAPP), two major building blocks of isoprenoid compounds. Catalyzes the conversion of 4-diphosphocytidyl-2-C-methyl-D-erythritol 2-phosphate (CDP-ME2P) to 2-C-methyl-D-erythritol 2,4-cyclodiphosphate (ME-CPP) with a corresponding release of cytidine 5-monophosphate (CMP). This Pseudomonas aeruginosa (strain UCBPP-PA14) protein is 2-C-methyl-D-erythritol 2,4-cyclodiphosphate synthase.